The following is a 348-amino-acid chain: D-amino-acid oxidase (348 aa).

6 residues coordinate FAD: alanine 15, isoleucine 18, lysine 40, serine 52, glycine 56, and asparagine 58. The (R)-lactate site is built by tyrosine 232 and arginine 295. Residues tyrosine 232 and arginine 295 each contribute to the anthranilate site. Residues arginine 295, serine 323, glycine 326, tyrosine 327, and glutamine 328 each coordinate FAD.

Belongs to the DAMOX/DASOX family. FAD is required as a cofactor.

The protein localises to the peroxisome. The catalysed reaction is a D-alpha-amino acid + O2 + H2O = a 2-oxocarboxylate + H2O2 + NH4(+). The enzyme catalyses D-serine + O2 + H2O = 3-hydroxypyruvate + H2O2 + NH4(+). It carries out the reaction D-alanine + O2 + H2O = pyruvate + H2O2 + NH4(+). It catalyses the reaction D-arginine + O2 + H2O = 5-guanidino-2-oxopentanoate + H2O2 + NH4(+). Its function is as follows. Catalyzes the oxidative deamination of D-amino acids with broad substrate specificity. Enables the organism to utilize D-amino acids as a source of nutrients. This Schizosaccharomyces pombe (strain 972 / ATCC 24843) (Fission yeast) protein is D-amino-acid oxidase.